Consider the following 385-residue polypeptide: Glucans biosynthesis protein C (385 aa).

Helical transmembrane passes span 17 to 37 (AWLM…SHTW), 60 to 80 (MQVF…RYPL), 91 to 111 (VGIP…IMLQ), 137 to 157 (ISHL…VWIF), 173 to 193 (KFSM…YAVI), 212 to 232 (FIVM…LAFI), 239 to 259 (LFTT…VAYL), 274 to 294 (TESV…FSFG), 311 to 331 (ASLF…AYIT), and 338 to 358 (WLGF…LYEI).

The protein belongs to the acyltransferase 3 family. OpgC subfamily.

It localises to the cell membrane. It participates in glycan metabolism; osmoregulated periplasmic glucan (OPG) biosynthesis. Its function is as follows. Necessary for the succinyl substitution of periplasmic glucans. Could catalyze the transfer of succinyl residues from the cytoplasmic side of the membrane to the nascent glucan backbones on the periplasmic side of the membrane. The polypeptide is Glucans biosynthesis protein C (Escherichia coli O17:K52:H18 (strain UMN026 / ExPEC)).